The primary structure comprises 845 residues: Putative DEAD-box ATP-dependent RNA helicase 33 (845 aa).

Disordered stretches follow at residues 129-149 and 282-302; these read GHPD…PMSP and KFRK…NEGK. Positions 289–298 are enriched in acidic residues; that stretch reads STEEDSDEEG. A Q motif motif is present at residues 375-403; it reads KRFDESCISPLTLKALSASGIVKMTRVQD. Positions 406–590 constitute a Helicase ATP-binding domain; that stretch reads LSECLDGKDA…QLVLKRDHSY (185 aa). Position 419-426 (419-426) interacts with ATP; the sequence is AKTGTGKS. A DEAD box motif is present at residues 538 to 541; sequence DEAD. The Helicase C-terminal domain occupies 624 to 778; the sequence is LLKEHINNMP…QVDQSMAKID (155 aa).

It belongs to the DEAD box helicase family.

The catalysed reaction is ATP + H2O = ADP + phosphate + H(+). The chain is Putative DEAD-box ATP-dependent RNA helicase 33 (RH33) from Arabidopsis thaliana (Mouse-ear cress).